Here is a 515-residue protein sequence, read N- to C-terminus: Maturase K (515 aa).

Belongs to the intron maturase 2 family. MatK subfamily.

The protein resides in the plastid. The protein localises to the chloroplast. In terms of biological role, usually encoded in the trnK tRNA gene intron. Probably assists in splicing its own and other chloroplast group II introns. The chain is Maturase K from Pinus patula (Mexican weeping pine).